The primary structure comprises 334 residues: MESPCRTITLEKNGTSLEPVHYSVQGKEILQIFKENFQKEDPVLFLDGTAGEGGHSFLFLKEFPNSRIILCDRDPIMLSRALTRLSDFSERVVSIQTNFSEINQKLLTSYGIDQTPQGILLDLGISTFHLFHSGRGFSFRESEPLDMRLNPNSGQSAEEILNIYPKDRLMNIFYTYGEERWSKKIAEVIVETRKQNSISTTFELANLVSKIIPRKFWPPGRHPATRIFQALRIEVNQELAHIENGLKLLLDLLRLGGVIQVISFHSLEDRIVKNSFRDYAKQNGFELLTKKPILPSQEEIDENPASRSAKLRILRKTKSVDKKYRNKNFEEEEE.

Residues 53 to 55, aspartate 72, phenylalanine 99, aspartate 122, and histidine 129 each bind S-adenosyl-L-methionine; that span reads GGH.

Belongs to the methyltransferase superfamily. RsmH family.

The protein localises to the cytoplasm. It catalyses the reaction cytidine(1402) in 16S rRNA + S-adenosyl-L-methionine = N(4)-methylcytidine(1402) in 16S rRNA + S-adenosyl-L-homocysteine + H(+). In terms of biological role, specifically methylates the N4 position of cytidine in position 1402 (C1402) of 16S rRNA. In Leptospira interrogans serogroup Icterohaemorrhagiae serovar copenhageni (strain Fiocruz L1-130), this protein is Ribosomal RNA small subunit methyltransferase H.